We begin with the raw amino-acid sequence, 230 residues long: Ureidoacrylate amidohydrolase RutB (230 aa).

Asp-24 functions as the Proton acceptor in the catalytic mechanism. Residue Lys-133 is part of the active site. Residue Cys-166 is the Nucleophile of the active site.

It belongs to the isochorismatase family. RutB subfamily.

It carries out the reaction (Z)-3-ureidoacrylate + H2O + H(+) = (Z)-3-aminoacrylate + NH4(+) + CO2. It catalyses the reaction (Z)-3-ureidoacrylate + H2O = (Z)-3-aminoacrylate + carbamate + H(+). The enzyme catalyses (Z)-2-methylureidoacrylate + H2O + H(+) = (Z)-2-methylaminoacrylate + NH4(+) + CO2. Its function is as follows. Hydrolyzes ureidoacrylate to form aminoacrylate and carbamate. The carbamate hydrolyzes spontaneously, thereby releasing one of the nitrogen atoms of the pyrimidine ring as ammonia and one of its carbon atoms as CO2. In Escherichia coli (strain B / BL21-DE3), this protein is Ureidoacrylate amidohydrolase RutB.